The following is a 497-amino-acid chain: Amino acid oxidase fsqB (497 aa).

FAD-binding residues include Val14, Phe15, Asp38, Asn53, Ala57, Asn58, Arg63, Val64, and Val211. Position 414 is an S-8alpha-FAD cysteine (Cys414). Phe447 and Lys448 together coordinate FAD.

The protein belongs to the MSOX/MTOX family. In terms of assembly, dimer. It depends on FAD as a cofactor.

The enzyme catalyses (2S,4S,5S)-2-amino-6-(3,4-dihydroxyphenyl)-4-hydroxy-5-(methylamino)hexanoyl-[peptidyl-carrier protein] + O2 = (2S,4S)-2-amino-4-[(3S)-7,8-dihydroxy-1,2,3,4-tetrahydroisoquinolin-3-yl]-4-hydroxybutanoyl-[peptidyl-carrier protein] + H2O2. It carries out the reaction N-methyl-L-dopa + O2 = (3S)-7,8-dihydroxy-1,2,3,4-tetrahydroisoquinoline-3-carboxylate + H2O2. The catalysed reaction is N-methyl-D-dopa + O2 = (3R)-7,8-dihydroxy-1,2,3,4-tetrahydroisoquinoline-3-carboxylate + H2O2. It participates in secondary metabolite biosynthesis. Functionally, amino acid oxidase; part of the gene cluster that mediates the biosynthesis of the isoquinoline alkaloids fumisoquin A, fumisoquin B and fumisoquin C; as well as small amounts of fumipyrrole as a shunt metabolite. The products of the cluster lead to a brown coloration and are important for growth and conidiation. The nonribosomal peptide synthetase-like protein fsqF, which lacks a canonical condensation domain, is required for addition of a serine-derived dehydroalanine moiety to activated tyrosine but is not essential for the subsequent steps leading to isoquinoline formation. A different enzyme, most likely the ATP-grasp enzyme fsqD, is responsible for activation of tyrosine. Three additional enzymes encoded by the fsq cluster, the N-methyltransferase fsqC, the phenol 2-monooxygenase fsqG and the FAD-dependent oxidase fsqB, catalyze the formation of the isoquinoline ring system in the fumisoquins. FsqB converts the fspF thiolation domain-bound (2S,4S,5S)-2-amino-6-(3,4-dihydroxyphenyl)-4-hydroxy-5-(methylamino)hexanoyl into isoquinoline. The cyclization most likely proceeds via a two-step mechanism, beginning with FAD-dependent oxidation of the methyl group to an iminium species followed by electrophilic attack on the deprotonated phenol. In terms of biological role, is able to convert N-methyl-3,4-dihydroxy-DL-phenylalanine (N-methyl-DOPA) directly into cyclic isoquinoline, in vitro. The absence of the meta-hydroxyl group, as in L-N-methyl-tyrosine, leads to a 25-fold lower rate of reduction and the formation of the demethylated product L-tyrosine, instead of a cyclic product. Does not accept the D-stereoisomer of N-methyltyrosine, in contrast to N-methyl-DOPA, for which both stereoisomers are oxidized with similar rates. This is Amino acid oxidase fsqB from Aspergillus fumigatus (strain ATCC MYA-4609 / CBS 101355 / FGSC A1100 / Af293) (Neosartorya fumigata).